The sequence spans 304 residues: HTH-type transcriptional activator CmpR (304 aa).

The 61-residue stretch at 1-61 (MKNATLHQFE…EQIGRKIYLT (61 aa)) folds into the HTH lysR-type domain. Residues 21-40 (FTKAAEELFLTQPTVSQQMK) constitute a DNA-binding region (H-T-H motif).

The protein belongs to the LysR transcriptional regulatory family.

The protein resides in the cytoplasm. Its function is as follows. Activates transcription of the cmpABCD operon under carbon dioxide-limited conditions. Specifically binds to the cmpR-cmpA intergenic region. This Synechocystis sp. (strain ATCC 27184 / PCC 6803 / Kazusa) protein is HTH-type transcriptional activator CmpR (cmpR).